A 380-amino-acid chain; its full sequence is MATRIDYYESLEVSRTASQDELKKAFRKQAMRYHPDRNPGDDAAEQKFKEINEAYDVLKDEQKRAAYDRYGHDAFEGGMGGMGGGFGGGFAGAGGLGDIFDQMFGDMMGGRRDGGRRTGADVQVQVEITLMEAFTGVTKDVEVRTRVTCEACHGSGSADPKAGSSTCPTCHGAGKVRAQQGFFLVERPCPTCHGSGRTVANPCKVCHGTGTEAKTETISIDIPAGVEDGTRIRMAGKGEAGGEGVQPGDLYVHISVLSHDIFQRDGANIYCRVPLRMTQAALGTEVEVPVVDGGRSKVRIPAGTQTGETFRLRGKGFSVLRSSARGDMYIQVSVETPSHLTKRQRELLEEFEKEAGDDHAKGSPENSGFFAKVRDFFEGR.

In terms of domain architecture, J spans 6–71 (DYYESLEVSR…QKRAAYDRYG (66 aa)). The CR-type zinc-finger motif lies at 136–215 (GVTKDVEVRT…CHGTGTEAKT (80 aa)). Zn(2+) is bound by residues C149, C152, C167, C170, C189, C192, C203, and C206. CXXCXGXG motif repeat units follow at residues 149–156 (CEACHGSG), 167–174 (CPTCHGAG), 189–196 (CPTCHGSG), and 203–210 (CKVCHGTG).

The protein belongs to the DnaJ family. As to quaternary structure, homodimer. Zn(2+) serves as cofactor.

It localises to the cytoplasm. In terms of biological role, participates actively in the response to hyperosmotic and heat shock by preventing the aggregation of stress-denatured proteins and by disaggregating proteins, also in an autonomous, DnaK-independent fashion. Unfolded proteins bind initially to DnaJ; upon interaction with the DnaJ-bound protein, DnaK hydrolyzes its bound ATP, resulting in the formation of a stable complex. GrpE releases ADP from DnaK; ATP binding to DnaK triggers the release of the substrate protein, thus completing the reaction cycle. Several rounds of ATP-dependent interactions between DnaJ, DnaK and GrpE are required for fully efficient folding. Also involved, together with DnaK and GrpE, in the DNA replication of plasmids through activation of initiation proteins. In Gluconobacter oxydans (strain 621H) (Gluconobacter suboxydans), this protein is Chaperone protein DnaJ.